The chain runs to 107 residues: Holo-[acyl-carrier-protein] synthase (107 aa).

Residues aspartate 10 and glutamate 54 each contribute to the Mg(2+) site.

The protein belongs to the P-Pant transferase superfamily. AcpS family. Requires Mg(2+) as cofactor.

It is found in the cytoplasm. The catalysed reaction is apo-[ACP] + CoA = holo-[ACP] + adenosine 3',5'-bisphosphate + H(+). Functionally, transfers the 4'-phosphopantetheine moiety from coenzyme A to a Ser of acyl-carrier-protein. In Mycoplasma mobile (strain ATCC 43663 / 163K / NCTC 11711) (Mesomycoplasma mobile), this protein is Holo-[acyl-carrier-protein] synthase.